A 99-amino-acid chain; its full sequence is MHVTLVEINVKQDKLDEFIEVFRLNHLGSIKEAGNLRFDVLRDENIPTRFYIYEAYVDENAANTHKQTSHYLKCVEQLESLISEPRKKRSFIGVMPEIK.

The ABM domain occupies 2 to 91 (HVTLVEINVK…ISEPRKKRSF (90 aa)).

It belongs to the LsrG family. In terms of assembly, homodimer.

It localises to the cytoplasm. It catalyses the reaction (2S)-2-hydroxy-3,4-dioxopentyl phosphate = 3-hydroxy-2,4-dioxopentyl phosphate. Involved in the degradation of phospho-AI-2, thereby terminating induction of the lsr operon and closing the AI-2 signaling cycle. Catalyzes the conversion of (4S)-4-hydroxy-5-phosphonooxypentane-2,3-dione (P-DPD) to 3-hydroxy-5-phosphonooxypentane-2,4-dione (P-HPD). In Photorhabdus laumondii subsp. laumondii (strain DSM 15139 / CIP 105565 / TT01) (Photorhabdus luminescens subsp. laumondii), this protein is (4S)-4-hydroxy-5-phosphonooxypentane-2,3-dione isomerase.